A 368-amino-acid polypeptide reads, in one-letter code: Glutamine synthetase root isozyme 2 (368 aa).

Residues 19–99 (IIAEYIWVGG…VMCDCYEPNG (81 aa)) form the GS beta-grasp domain. A disordered region spans residues 38–66 (RTLSGPVDDPSKLPKWNFDGSSTGQAPGD). One can recognise a GS catalytic domain in the interval 106–368 (KRHGAAKIFS…NGDGKGAAAP (263 aa)).

The protein belongs to the glutamine synthetase family. As to quaternary structure, homooctamer. In terms of tissue distribution, found mainly in the vascular tissues of seedling roots.

The protein localises to the cytoplasm. The catalysed reaction is L-glutamate + NH4(+) + ATP = L-glutamine + ADP + phosphate + H(+). Its function is as follows. Plays a role in the flow of nitrogen into nitrogenous organic compounds. The sequence is that of Glutamine synthetase root isozyme 2 (GLN2) from Zea mays (Maize).